A 399-amino-acid chain; its full sequence is Tyrosine--tRNA ligase 2 (399 aa).

The short motif at 41–50 (PTAPDLHLGH) is the 'HIGH' region element. Positions 225–229 (KMSKS) match the 'KMSKS' region motif. Lysine 228 is a binding site for ATP. In terms of domain architecture, S4 RNA-binding spans 336 to 398 (ILIANLLKEA…GKRKFANITV (63 aa)).

It belongs to the class-I aminoacyl-tRNA synthetase family. TyrS type 2 subfamily. As to quaternary structure, homodimer.

The protein resides in the cytoplasm. It carries out the reaction tRNA(Tyr) + L-tyrosine + ATP = L-tyrosyl-tRNA(Tyr) + AMP + diphosphate + H(+). Its function is as follows. Catalyzes the attachment of tyrosine to tRNA(Tyr) in a two-step reaction: tyrosine is first activated by ATP to form Tyr-AMP and then transferred to the acceptor end of tRNA(Tyr). The sequence is that of Tyrosine--tRNA ligase 2 from Pseudoalteromonas translucida (strain TAC 125).